The following is a 134-amino-acid chain: Small ribosomal subunit protein uS9c (134 aa).

Positions 105 to 114 (DHHLTRDARA) are enriched in basic and acidic residues. The segment at 105 to 134 (DHHLTRDARAKERKKYGLHKARKAPQYSKR) is disordered. The span at 115–134 (KERKKYGLHKARKAPQYSKR) shows a compositional bias: basic residues.

The protein belongs to the universal ribosomal protein uS9 family.

It is found in the plastid. Its subcellular location is the cyanelle. The protein is Small ribosomal subunit protein uS9c (rps9) of Cyanophora paradoxa.